Reading from the N-terminus, the 131-residue chain is Profilin-1 (131 aa).

Belongs to the profilin family. Occurs in many kinds of cells as a complex with monomeric actin in a 1:1 ratio.

The protein localises to the cytoplasm. It localises to the cytoskeleton. Its function is as follows. Binds to actin and affects the structure of the cytoskeleton. At high concentrations, profilin prevents the polymerization of actin, whereas it enhances it at low concentrations. By binding to PIP2, it inhibits the formation of IP3 and DG. The protein is Profilin-1 of Hevea brasiliensis (Para rubber tree).